A 412-amino-acid polypeptide reads, in one-letter code: MSELHALLTFPERPISQSYYVPKLQHFLKSGIPATYTLEQVAAFEHEEKNRNGDKEFRESTDDNKTSNTTPLHVLARSLPLDIKDEELQVVMDMMNILFEYGAGWNFIDYEDKTVGDLFLERNQSRESPLYRRLVEAGVSAELLLRKLNGGDVEFLDTDELIGIEPEESVQTAVDGQKEESVGSDDDATAANQQVYLKTELEYKDDALITKENKDGVMMDWETKIMELASETLFPDPEATNSATILNIGFGMGIIDTFIQARKPYRHYICEAHPDVLAKMKMDGWYEKDNVVILEGRWQDTLNNLLDKGEVFFDGIYYDTFSEHYQDILDLYDVVVGLIKPEGVFSFFNGLGADRSLCYDVYKEIVEIDVATYGMKCDYTRYSLDEQLPDWNDVKRSYFNCNYYYHPRITFA.

Over residues 48 to 65 the composition is skewed to basic and acidic residues; that stretch reads EKNRNGDKEFRESTDDNK. 2 disordered regions span residues 48-69 and 169-189; these read EKNR…TSNT and SVQT…DDAT. Phosphoserine is present on residues Ser-181 and Ser-184. An RMT2 domain is found at 189–412; sequence TAANQQVYLK…YYYHPRITFA (224 aa). S-adenosyl-L-methionine-binding positions include Tyr-196, Met-226, 250 to 255, 271 to 273, 298 to 299, and Asp-319; these read FGMGII, EAH, and WQ.

The protein belongs to the class I-like SAM-binding methyltransferase superfamily. RMT2 methyltransferase family. Monomer. Interacts with nucleoporins NUP49, NUP57 and NUP100.

The protein localises to the cytoplasm. The protein resides in the nucleus. Its function is as follows. S-adenosyl-L-methionine-dependent protein-arginine N-methyltransferase that methylates the delta-nitrogen atom of arginine residues to form N5-methylarginine (type IV) in target proteins. Monomethylates ribosomal protein L12 (RPL12A/RPL12B) at 'Arg-67'. This Saccharomyces cerevisiae (strain ATCC 204508 / S288c) (Baker's yeast) protein is Protein arginine N-methyltransferase 2.